Here is a 462-residue protein sequence, read N- to C-terminus: tRNA modification GTPase MnmE (462 aa).

(6S)-5-formyl-5,6,7,8-tetrahydrofolate-binding residues include Arg27, Glu89, and Arg128. The TrmE-type G domain maps to 223 to 383 (GLKIAIVGRP…LEAAILAAVG (161 aa)). GTP-binding positions include 233–238 (NVGKSS), 252–258 (TDLPGRT), and 277–280 (DTAG). Residues Ser237 and Thr258 each coordinate Mg(2+). Lys462 serves as a coordination point for (6S)-5-formyl-5,6,7,8-tetrahydrofolate.

Belongs to the TRAFAC class TrmE-Era-EngA-EngB-Septin-like GTPase superfamily. TrmE GTPase family. As to quaternary structure, homodimer. Heterotetramer of two MnmE and two MnmG subunits. K(+) is required as a cofactor.

Its subcellular location is the cytoplasm. In terms of biological role, exhibits a very high intrinsic GTPase hydrolysis rate. Involved in the addition of a carboxymethylaminomethyl (cmnm) group at the wobble position (U34) of certain tRNAs, forming tRNA-cmnm(5)s(2)U34. The chain is tRNA modification GTPase MnmE from Synechococcus sp. (strain ATCC 27144 / PCC 6301 / SAUG 1402/1) (Anacystis nidulans).